The following is a 721-amino-acid chain: MPLPQTGAPGPEVKSPREPRKSQTLPVTTWKSNSMKEQSVHHGGSLRPSLGMLKQTLFRTSLRTSTHKPKEDPGLFRRSSRFLFRSLRRAIDEGLTAGHPQGPAVPEKPSKVTDGVSRQAATGTEAEDLEPQAESKSVADLITERQLVKAFEQLRYLETQLVADKTSRTFTQDPTAYARRAMDLCLHYDGMAAEIGAIVREALSSEGVDRDALAELAQVVHLEEEAHQTSQAEGDFLSTPRHWRMHWEDAVRLSAQESVQQAGAKVIPGAAEGSSDLAQLLAELGGVVRHDLQKVRLEMQPAYEATDFPVWETYLRAFHSAVAQRLQELARDARGCEQLYVLLDWAANVYGSPDFLGAPDLALPTEPLPPLLEPALWARLESDYTSFLETKITSCFDSILQLEQNRWEADEDREVLQGLYHAPLSIDVHMLVAEHVKAAGAISAELEATTLQICARALCLFVPRFEKAFLASKAVSEWYLGAYINACVELRTSLLARFPGTIKELEKPLVAATNSFQKHLLQIVQQDMQPLFKVLYTKSWLTQDTLRPLMDKVVDFAHHLEHVTPPLAQETLQEVHRFVVREYLGQVLRPHERFSGQDRLKGSNKMNLDAQAISNTFQGLGSEAKWLDQAILSVAEILGETYKDDIRRHLETLIRSYPDIRRDHILAILALRRLGRRRNQNLLQHTQDLLRAAHETRLPSHHVLFEEIEVPTSVDVLITCI.

Disordered stretches follow at residues 1–52 and 94–135; these read MPLP…SLGM and GLTA…QAES. The span at 22–37 shows a compositional bias: polar residues; the sequence is SQTLPVTTWKSNSMKE. Ser515 bears the Phosphoserine mark.

It belongs to the SEC6 family.

This is Exocyst complex component 3-like protein 4 (Exoc3l4) from Mus musculus (Mouse).